The primary structure comprises 155 residues: Small ribosomal subunit protein uS7 (155 aa).

Belongs to the universal ribosomal protein uS7 family. Part of the 30S ribosomal subunit. Contacts proteins S9 and S11.

One of the primary rRNA binding proteins, it binds directly to 16S rRNA where it nucleates assembly of the head domain of the 30S subunit. Is located at the subunit interface close to the decoding center, probably blocks exit of the E-site tRNA. In Amoebophilus asiaticus (strain 5a2), this protein is Small ribosomal subunit protein uS7.